The following is a 625-amino-acid chain: Glyco-Gag protein (625 aa).

The Cytoplasmic segment spans residues 1-66; the sequence is LGDVSEASGA…SVFRRNRAAR (66 aa). A helical transmembrane segment spans residues 67 to 86; it reads LVCLSIVLSFVCSLLFWTAS. Residues 87–625 lie on the Extracellular side of the membrane; the sequence is KNMGQTVTTP…PQTSLLTLDD (539 aa). Asparagine 113 carries an N-linked (GlcNAc...) asparagine; by host glycan. The interval 195–305 is disordered; sequence PSPTAPILPS…STTSRAFPLR (111 aa). N-linked (GlcNAc...) asparagine; by host glycosylation is present at asparagine 479. Basic and acidic residues-rich tracts occupy residues 522-553 and 573-606; these read ETPEEREERVRRETEEKEERRRAEEEQKEKER and RQDRQGGERRRPQLDKDQCAYCKEKGHWAKDCPK. A disordered region spans residues 522–625; it reads ETPEEREERV…PQTSLLTLDD (104 aa).

Glycosylated by host. In terms of processing, cleaved by host near the middle of the molecule, releasing the c-terminal half containing capsid and nucleoprotein domains op GAG.

The protein resides in the host cell membrane. Plays a role in viral particle release. Presumably acts by facilitating the fission of the virion bud at the cell surface. May prevent the antiviral activity of murine APOBEC3. This is Glyco-Gag protein from AKV murine leukemia virus (AKR (endogenous) murine leukemia virus).